A 202-amino-acid chain; its full sequence is Superoxide dismutase [Cu-Zn], chloroplastic (202 aa).

A chloroplast-targeting transit peptide spans 1–48 (MASQTLVSPSPLSSHSLLRTSFSGVSVKLAPQFSTLATSNFKPLTVVA). Residues H94, H96, and H111 each coordinate Cu cation. C105 and C194 are disulfide-bonded. Residues H111, H119, H128, and D131 each contribute to the Zn(2+) site. H168 is a binding site for Cu cation.

The protein belongs to the Cu-Zn superoxide dismutase family. Homotetramer. Cu cation serves as cofactor. It depends on Zn(2+) as a cofactor.

The protein resides in the plastid. It is found in the chloroplast. The catalysed reaction is 2 superoxide + 2 H(+) = H2O2 + O2. In terms of biological role, destroys radicals which are normally produced within the cells and which are toxic to biological systems. The sequence is that of Superoxide dismutase [Cu-Zn], chloroplastic (SODCP) from Pisum sativum (Garden pea).